A 206-amino-acid polypeptide reads, in one-letter code: Guanylate kinase (206 aa).

Residues 6 to 184 enclose the Guanylate kinase-like domain; it reads GILFILSGPS…AVDKVKTIIK (179 aa). An ATP-binding site is contributed by 13–20; the sequence is GPSGVGKG.

Belongs to the guanylate kinase family.

It is found in the cytoplasm. The enzyme catalyses GMP + ATP = GDP + ADP. Essential for recycling GMP and indirectly, cGMP. The sequence is that of Guanylate kinase from Oceanobacillus iheyensis (strain DSM 14371 / CIP 107618 / JCM 11309 / KCTC 3954 / HTE831).